A 140-amino-acid chain; its full sequence is MKFFVPAFLFAATAMALPGSGSAAGVAPHSNNEVEDAVNKCGDGAHMSCCNKINKNEGISQNNIGVLSNVLGAIGSEGLGLGQGCTQLDIPISVLGAAGLTDFLKKNCQQNIACCQNSNSQANGNLVGVAAPCVSFGGLL.

Positions 1–23 are cleaved as a signal peptide; sequence MKFFVPAFLFAATAMALPGSGSA. Intrachain disulfides connect cysteine 41–cysteine 114, cysteine 49–cysteine 108, cysteine 50–cysteine 85, and cysteine 115–cysteine 133.

This sequence belongs to the fungal hydrophobin family.

The protein localises to the secreted. The protein resides in the cell wall. Aerial growth, conidiation, and dispersal of filamentous fungi in the environment rely upon a capability of their secreting small amphipathic proteins called hydrophobins (HPBs) with low sequence identity. Class I can self-assemble into an outermost layer of rodlet bundles on aerial cell surfaces, conferring cellular hydrophobicity that supports fungal growth, development and dispersal; whereas Class II form highly ordered films at water-air interfaces through intermolecular interactions but contribute nothing to the rodlet structure. In P.expansum, hydrophobins contribute to germination, tolerance to cold stress and mycotoxins patulin and citrinin production. HfbC is involved in the virulence on apple. The polypeptide is Class I hydrophobin C (Penicillium expansum (Blue mold rot fungus)).